Reading from the N-terminus, the 451-residue chain is UDP-N-acetylmuramoylalanine--D-glutamate ligase (451 aa).

120–126 provides a ligand contact to ATP; sequence GSNGKTT.

The protein belongs to the MurCDEF family.

Its subcellular location is the cytoplasm. It carries out the reaction UDP-N-acetyl-alpha-D-muramoyl-L-alanine + D-glutamate + ATP = UDP-N-acetyl-alpha-D-muramoyl-L-alanyl-D-glutamate + ADP + phosphate + H(+). Its pathway is cell wall biogenesis; peptidoglycan biosynthesis. Cell wall formation. Catalyzes the addition of glutamate to the nucleotide precursor UDP-N-acetylmuramoyl-L-alanine (UMA). This is UDP-N-acetylmuramoylalanine--D-glutamate ligase (murD) from Bacillus subtilis (strain 168).